Consider the following 196-residue polypeptide: Thymidine kinase (196 aa).

Residues 9 to 16 and 85 to 88 contribute to the ATP site; these read GTMNSGKS and DEAQ. Glu86 serves as the catalytic Proton acceptor. Cys143, Cys146, Cys180, and His183 together coordinate Zn(2+).

Belongs to the thymidine kinase family. As to quaternary structure, homotetramer.

It localises to the cytoplasm. It catalyses the reaction thymidine + ATP = dTMP + ADP + H(+). This chain is Thymidine kinase, found in Streptococcus thermophilus (strain CNRZ 1066).